The chain runs to 317 residues: L-lactate dehydrogenase (317 aa).

NAD(+) is bound by residues V17, D38, K43, Y68, and 82 to 83 (GV). R91 contacts substrate. Residues S104, 121-123 (VSN), and S146 contribute to the NAD(+) site. 123–126 (NPVD) serves as a coordination point for substrate. 151–154 (DTSR) serves as a coordination point for substrate. Beta-D-fructose 1,6-bisphosphate is bound by residues K156 and H171. The Proton acceptor role is filled by H178. Y224 is subject to Phosphotyrosine. T233 contributes to the substrate binding site.

This sequence belongs to the LDH/MDH superfamily. LDH family. In terms of assembly, homotetramer.

It is found in the cytoplasm. The catalysed reaction is (S)-lactate + NAD(+) = pyruvate + NADH + H(+). It participates in fermentation; pyruvate fermentation to lactate; (S)-lactate from pyruvate: step 1/1. Its activity is regulated as follows. Allosterically activated by fructose 1,6-bisphosphate (FBP). Its function is as follows. Catalyzes the conversion of lactate to pyruvate. The protein is L-lactate dehydrogenase of Clostridium perfringens (strain ATCC 13124 / DSM 756 / JCM 1290 / NCIMB 6125 / NCTC 8237 / Type A).